The following is a 1026-amino-acid chain: Beta-galactosidase (1026 aa).

Catalysis depends on Glu-458, which acts as the Proton donor. The active-site Nucleophile is the Glu-546.

Belongs to the glycosyl hydrolase 2 family.

It catalyses the reaction Hydrolysis of terminal non-reducing beta-D-galactose residues in beta-D-galactosides.. This Streptococcus thermophilus protein is Beta-galactosidase (lacZ).